Here is a 187-residue protein sequence, read N- to C-terminus: Lysozyme 3 (187 aa).

The first 18 residues, 1–18, serve as a signal peptide directing secretion; the sequence is MNGLFLFCVATTAALAYG. One can recognise an I-type lysozyme domain in the interval 68 to 183; it reads TGIVSQQCLQ…WSHVHAQGCS (116 aa). 6 cysteine pairs are disulfide-bonded: Cys75–Cys151, Cys80–Cys86, Cys91–Cys100, Cys113–Cys133, Cys123–Cys129, and Cys147–Cys165. Catalysis depends on Glu83, which acts as the Proton donor. The Nucleophile role is filled by Asp94. Substrate is bound at residue 106-112; it reads KEGYWHD. Substrate-binding positions include Tyr137 and 158-160; that span reads HNG.

As to expression, highest levels of expression detected in the digestive glands. Lower levels in the mantle, labial palps, gills and style-midgut sac, and lowest levels detected in the hemocytes. Not detected in the gonads.

The protein localises to the secreted. It catalyses the reaction Hydrolysis of (1-&gt;4)-beta-linkages between N-acetylmuramic acid and N-acetyl-D-glucosamine residues in a peptidoglycan and between N-acetyl-D-glucosamine residues in chitodextrins.. In terms of biological role, has antibacterial activity against the Gram-negative bacterium E.coli. No antibacterial activity detected against the Gram-negative bacterium V.vulnificus. This chain is Lysozyme 3, found in Crassostrea virginica (Eastern oyster).